A 124-amino-acid polypeptide reads, in one-letter code: Flowering-promoting factor 1-like protein 1 (124 aa).

A disordered region spans residues P19–R42. Residues Q22–Q39 are compositionally biased toward low complexity.

It belongs to the FPF1 family. Expressed in roots, flowers, and at a low level, in leaves.

Its function is as follows. Modulates the competence to flowering of apical meristems. The polypeptide is Flowering-promoting factor 1-like protein 1 (FLP1) (Arabidopsis thaliana (Mouse-ear cress)).